The chain runs to 607 residues: Glycerophosphodiester phosphodiesterase domain-containing protein 5 (607 aa).

At 1–42 (MVRHQPLQYYEPQLCLSCLTGIYGCRWKRYQRSHDDTTPWER) the chain is on the cytoplasmic side. 2 disulfides stabilise this stretch: cysteine 15-cysteine 18 and cysteine 25-cysteine 571. A helical membrane pass occupies residues 43 to 63 (LWFLLLVCTFSLTLTWLYFWW). Over 64–89 (GVHNDYDEFNWYLYNRMGYWSDWSVP) the chain is Extracellular. The helical transmembrane segment at 90-110 (ILVTSAAAFTYIAGLLVLALC) threads the bilayer. At 111–125 (HIAVGQQLNLHWIHK) the chain is on the cytoplasmic side. The helical transmembrane segment at 126-146 (MGLVVILASTVVAMSAVAQLW) threads the bilayer. Residues 147–160 (EDEWEVLLISLQGT) lie on the Extracellular side of the membrane. Residues 161 to 181 (APFLHIGALVAITALSWIVAG) traverse the membrane as a helical segment. Topologically, residues 182-192 (QFARAERSSSQ) are cytoplasmic. A helical membrane pass occupies residues 193 to 213 (LTILCTFFAVVFTFYLIPLTI). Residues 214–496 (SSPCIMEKKD…PLWIMPPDEY (283 aa)) are Extracellular-facing. The GP-PDE domain maps to 228 to 485 (PALIGHRGAP…DNSHTLSRVP (258 aa)). Residues asparagine 301, asparagine 336, asparagine 352, asparagine 374, and asparagine 448 are each glycosylated (N-linked (GlcNAc...) asparagine). A helical transmembrane segment spans residues 497–517 (CLMWVTADLISFSLIIGIFVL). At 518-607 (QKWRLGGIRS…AKTVTEQSGH (90 aa)) the chain is on the cytoplasmic side. A disordered region spans residues 582-607 (ANSTATPVGPRNAGSRAKTVTEQSGH).

It belongs to the glycerophosphoryl diester phosphodiesterase family. As to quaternary structure, interacts with PRDX1; forms a mixed-disulfide with PRDX1, leading to disrupt intramolecular disulfide bond between Cys-25 and Cys-571. Post-translationally, intramolecular disulfide bond between Cys-25 and Cys-571 is reduced by PRDX1. In terms of tissue distribution, detected in brain, lung, heart, kidney and testis.

It localises to the endomembrane system. Its subcellular location is the cytoplasm. The protein localises to the perinuclear region. It is found in the cell projection. The protein resides in the growth cone. It carries out the reaction a 1,2-diacyl-sn-glycero-3-phospho-(1D-myo-inositol-4,5-bisphosphate) + H2O = 1D-myo-inositol 1,4,5-trisphosphate + a 1,2-diacyl-sn-glycerol + H(+). It catalyses the reaction sn-glycerol 3-phosphocholine + H2O = sn-glycerol 3-phosphate + choline + H(+). Inhibited by high level of NaCl or urea. Its function is as follows. Glycerophosphodiester phosphodiesterase that promotes neurite formation and drives spinal motor neuron differentiation. Mediates the cleavage of glycosylphosphatidylinositol (GPI) anchor of target proteins: removes the GPI-anchor of RECK, leading to release RECK from the plasma membrane. May contribute to the osmotic regulation of cellular glycerophosphocholine. This chain is Glycerophosphodiester phosphodiesterase domain-containing protein 5, found in Mus musculus (Mouse).